The chain runs to 351 residues: Fe(3+) ions import ATP-binding protein FbpC (351 aa).

The region spanning 9-239 is the ABC transporter domain; that stretch reads LVLKNINKTF…PNSLFLANFM (231 aa). 41-48 provides a ligand contact to ATP; that stretch reads GPSGCGKT.

It belongs to the ABC transporter superfamily. Fe(3+) ion importer (TC 3.A.1.10) family. The complex is composed of two ATP-binding proteins (FbpC), two transmembrane proteins (FbpB) and a solute-binding protein (FbpA).

It is found in the cell inner membrane. The enzyme catalyses Fe(3+)(out) + ATP + H2O = Fe(3+)(in) + ADP + phosphate + H(+). Its function is as follows. Part of the ABC transporter complex FbpABC involved in Fe(3+) ions import. Responsible for energy coupling to the transport system. This is Fe(3+) ions import ATP-binding protein FbpC from Mannheimia succiniciproducens (strain KCTC 0769BP / MBEL55E).